Consider the following 123-residue polypeptide: Small ribosomal subunit protein uS12 (123 aa).

Residues 1 to 26 form a disordered region; the sequence is MPTINQLVRKPRKSRSSLNKAPALQH. Asp-90 bears the 3-methylthioaspartic acid mark.

The protein belongs to the universal ribosomal protein uS12 family. In terms of assembly, part of the 30S ribosomal subunit. Contacts proteins S8 and S17. May interact with IF1 in the 30S initiation complex.

In terms of biological role, with S4 and S5 plays an important role in translational accuracy. Functionally, interacts with and stabilizes bases of the 16S rRNA that are involved in tRNA selection in the A site and with the mRNA backbone. Located at the interface of the 30S and 50S subunits, it traverses the body of the 30S subunit contacting proteins on the other side and probably holding the rRNA structure together. The combined cluster of proteins S8, S12 and S17 appears to hold together the shoulder and platform of the 30S subunit. This is Small ribosomal subunit protein uS12 from Ehrlichia chaffeensis (strain ATCC CRL-10679 / Arkansas).